Reading from the N-terminus, the 277-residue chain is Radial spoke head protein 9 homolog (277 aa).

The protein belongs to the flagellar radial spoke RSP9 family. In terms of assembly, component of axonemal radial spoke complexes.

The protein localises to the cytoplasm. It localises to the cytoskeleton. Its subcellular location is the cilium axoneme. It is found in the flagellum axoneme. The protein resides in the cell projection. The protein localises to the kinocilium. Functionally, functions as part of axonemal radial spoke complexes that play an important part in the motility of sperm and cilia. Required for motility of olfactory and neural cilia and for the structural integrity of ciliary axonemes in both 9+0 and 9+2 motile cilia. Essential for both the radial spoke head assembly and the central pair microtubule stability in ependymal motile cilia. The polypeptide is Radial spoke head protein 9 homolog (rsph9) (Danio rerio (Zebrafish)).